We begin with the raw amino-acid sequence, 121 residues long: MVSDCITRSERRKKRVRLKLRRNSSLLRLSIFKSNRHFYVQLIDDKCGRTFASASTLESEVIAVTNRKVNSNAVKIVAKLMSDRLNKLGNCKKFVFDRGPYKYTGIVSEFANELRNYGFEI.

This sequence belongs to the universal ribosomal protein uL18 family. As to quaternary structure, part of the 50S ribosomal subunit; part of the 5S rRNA/L5/L18/L25 subcomplex. Contacts the 5S and 23S rRNAs.

Functionally, this is one of the proteins that bind and probably mediate the attachment of the 5S RNA into the large ribosomal subunit, where it forms part of the central protuberance. The polypeptide is Large ribosomal subunit protein uL18 (Ehrlichia canis (strain Jake)).